A 253-amino-acid chain; its full sequence is Major prion protein (253 aa).

A signal peptide spans 1-22 (MANLGCWMLVLFVATWSDLGLC). The tract at residues 23-230 (KKRPKPGGWN…ESQAYYQRGS (208 aa)) is interaction with GRB2, ERI3 and SYN1. The tract at residues 26 to 108 (PKPGGWNTGG…WNKPSKPKTN (83 aa)) is disordered. Tandem repeats lie at residues 51-59 (PQGGGGWGQ), 60-67 (PHGGGWGQ), 68-75 (PHGGGWGQ), 76-83 (PHGGGWGQ), and 84-91 (PHGGGWGQ). The segment at 51-91 (PQGGGGWGQPHGGGWGQPHGGGWGQPHGGGWGQPHGGGWGQ) is 5 X 8 AA tandem repeats of P-H-G-G-G-W-G-Q. A compositionally biased stretch (gly residues) spans 52–95 (QGGGGWGQPHGGGWGQPHGGGWGQPHGGGWGQPHGGGWGQGGGT). The Cu(2+) site is built by histidine 61, glycine 62, glycine 63, histidine 69, glycine 70, glycine 71, histidine 77, glycine 78, glycine 79, histidine 85, glycine 86, and glycine 87. Cysteine 179 and cysteine 214 are oxidised to a cystine. Residues asparagine 181 and asparagine 197 are each glycosylated (N-linked (GlcNAc...) asparagine). Serine 230 carries the GPI-anchor amidated serine lipid modification. Residues 231–253 (SMVLFSSPPVILLISFLIFLIVG) constitute a propeptide, removed in mature form.

The protein belongs to the prion family. Monomer and homodimer. Has a tendency to aggregate into amyloid fibrils containing a cross-beta spine, formed by a steric zipper of superposed beta-strands. Soluble oligomers may represent an intermediate stage on the path to fibril formation. Copper binding may promote oligomerization. Interacts with GRB2, APP, ERI3/PRNPIP and SYN1. Mislocalized cytosolically exposed PrP interacts with MGRN1; this interaction alters MGRN1 subcellular location and causes lysosomal enlargement. Interacts with KIAA1191.

The protein resides in the cell membrane. The protein localises to the golgi apparatus. Functionally, its primary physiological function is unclear. Has cytoprotective activity against internal or environmental stresses. May play a role in neuronal development and synaptic plasticity. May be required for neuronal myelin sheath maintenance. May play a role in iron uptake and iron homeostasis. Soluble oligomers are toxic to cultured neuroblastoma cells and induce apoptosis (in vitro). Association with GPC1 (via its heparan sulfate chains) targets PRNP to lipid rafts. Also provides Cu(2+) or Zn(2+) for the ascorbate-mediated GPC1 deaminase degradation of its heparan sulfate side chains. The sequence is that of Major prion protein (PRNP) from Hylobates lar (Lar gibbon).